The sequence spans 249 residues: Methionine aminopeptidase 2 (249 aa).

His-76 contributes to the substrate binding site. 3 residues coordinate a divalent metal cation: Asp-94, Asp-105, and His-168. His-175 contributes to the substrate binding site. 2 residues coordinate a divalent metal cation: Glu-202 and Glu-233.

In terms of assembly, monomer. Co(2+) serves as cofactor. The cofactor is Zn(2+). Mn(2+) is required as a cofactor. It depends on Fe(2+) as a cofactor.

It is found in the cytoplasm. The enzyme catalyses Release of N-terminal amino acids, preferentially methionine, from peptides and arylamides.. In terms of biological role, removes the N-terminal methionine from nascent proteins. The N-terminal methionine is often cleaved when the second residue in the primary sequence is small and uncharged (Met-Ala-, Cys, Gly, Pro, Ser, Thr, or Val). Requires deformylation of the N(alpha)-formylated initiator methionine before it can be hydrolyzed. This Bacillus subtilis (strain 168) protein is Methionine aminopeptidase 2.